The following is a 655-amino-acid chain: RalA-binding protein 1 (655 aa).

The interval 1–158 (MTECFLPPTS…KKSKDLTAAD (158 aa)) is disordered. N-acetylthreonine is present on Thr-2. Polar residues predominate over residues 24-33 (LTRTPSSEEI). Phosphoserine is present on residues Ser-29, Ser-30, and Ser-34. Position 44 is a phosphothreonine (Thr-44). A phosphoserine mark is found at Ser-48 and Ser-62. The span at 52-68 (DILHEPPDVVSDDEKDH) shows a compositional bias: basic and acidic residues. Position 69–74 (69–74 (GKKKGK)) interacts with ATP. Positions 69-79 (GKKKGKFKKKE) are enriched in basic residues. Phosphoserine occurs at positions 92 and 93. Residues 102-118 (KMKRSKGIHVFKKPSFS) are compositionally biased toward basic residues. The nuclear localization signal stretch occupies residues 102-119 (KMKRSKGIHVFKKPSFSK). Residues 119–155 (KKKEKDFKIKEKPKEEKHKEEKHKEEKHKEKKSKDLT) are compositionally biased toward basic and acidic residues. Residues 154 to 219 (LTAADVVKQW…PAVFRECIDY (66 aa)) form a mediates association with membranes and could form transmembrane domains region. The Rho-GAP domain maps to 192-380 (IPLADAVERT…VVLKQVMKPL (189 aa)). The segment at 403 to 499 (RRQEFLLNCL…LTEQEELLAM (97 aa)) is mediates interaction with RALA and RALB. 418–425 (GGIKDLSK) provides a ligand contact to ATP. Phosphoserine occurs at positions 461 and 463. Residues 500–655 (EQFLRRQIAS…PSRDRKETSI (156 aa)) are mediates interaction with REPS1 and REPS2. 2 disordered regions span residues 525–551 (QSRQQHGRSETEEYSSESESESEDEEE) and 601–655 (AEQQ…ETSI). Over residues 536-551 (EEYSSESESESEDEEE) the composition is skewed to acidic residues. The segment covering 624-655 (GVLEPKAAKEQPKAGKEPAKPSPSRDRKETSI) has biased composition (basic and acidic residues). Ser-645 is modified (phosphoserine).

As to quaternary structure, interacts with the GTP-bound form of RALA (via effector domain); during mitosis, recruits RALBP1 to the mitochondrion where it promotes DNM1L phosphorylation and mitochondrial fission. Interacts with DNM1L; mediates its mitotic kinase cyclin B-CDK1-mediated phosphorylation during mitosis to promote mitochondrial fission. Interacts with the mitotic kinase cyclin B-CDK1 during mitosis. Interacts with the GTP-bound form of RALB (via effector domain). Interacts with REPS1; the interaction is direct and does not affect RALA-binding nor GTPase activator activity of RALBP1. Interacts with REPS2; the interaction is direct and does not affect RALA-binding nor GTPase activator activity of RALBP1. Interacts with EPN1, NUMB and TFAP2A during interphase and mitosis. Interacts with AP2M1; as part of the AP2 complex. Interacts with CDC42. Interacts with RAC1. Tyrosine-phosphorylated upon stimulation of cells with EGF. In terms of processing, may undergo proteolytic cleavage to give peptides which reassemble to form a transporter complex. In terms of tissue distribution, expressed ubiquitously but at low levels. Shows a strong expression in the erythrocytes.

It is found in the cell membrane. The protein resides in the cytoplasm. Its subcellular location is the cytosol. It localises to the cytoskeleton. The protein localises to the spindle pole. It is found in the nucleus. The protein resides in the mitochondrion. The catalysed reaction is an S-substituted glutathione(in) + ATP + H2O = an S-substituted glutathione(out) + ADP + phosphate + H(+). The enzyme catalyses ATP + H2O + xenobioticSide 1 = ADP + phosphate + xenobioticSide 2.. It catalyses the reaction leukotriene C4(in) + ATP + H2O = leukotriene C4(out) + ADP + phosphate + H(+). Its function is as follows. Multifunctional protein that functions as a downstream effector of RALA and RALB. As a GTPase-activating protein/GAP can inactivate CDC42 and RAC1 by stimulating their GTPase activity. As part of the Ral signaling pathway, may also regulate ligand-dependent EGF and insulin receptors-mediated endocytosis. During mitosis, may act as a scaffold protein in the phosphorylation of EPSIN/EPN1 by the mitotic kinase cyclin B-CDK1, preventing endocytosis during that phase of the cell cycle. During mitosis, also controls mitochondrial fission as an effector of RALA. Recruited to mitochondrion by RALA, acts as a scaffold to foster the mitotic kinase cyclin B-CDK1-mediated phosphorylation and activation of DNM1L. Functionally, could also function as a primary ATP-dependent active transporter for glutathione conjugates of electrophiles. May also actively catalyze the efflux of a wide range of substrates including xenobiotics like doxorubicin (DOX) contributing to cell multidrug resistance. This chain is RalA-binding protein 1, found in Homo sapiens (Human).